Here is a 758-residue protein sequence, read N- to C-terminus: 5-methyltetrahydropteroyltriglutamate--homocysteine methyltransferase (758 aa).

Residues 17–20 (RELK) and Lys-117 each bind 5-methyltetrahydropteroyltri-L-glutamate. L-homocysteine-binding positions include 434–436 (IGS) and Glu-487. Residues 434–436 (IGS) and Glu-487 contribute to the L-methionine site. Residues 518 to 519 (RC) and Trp-564 contribute to the 5-methyltetrahydropteroyltri-L-glutamate site. Asp-602 contributes to the L-homocysteine binding site. Residue Asp-602 coordinates L-methionine. Glu-608 lines the 5-methyltetrahydropteroyltri-L-glutamate pocket. The Zn(2+) site is built by His-644, Cys-646, and Glu-668. His-697 functions as the Proton donor in the catalytic mechanism. Position 729 (Cys-729) interacts with Zn(2+).

The protein belongs to the vitamin-B12 independent methionine synthase family. Requires Zn(2+) as cofactor.

The enzyme catalyses 5-methyltetrahydropteroyltri-L-glutamate + L-homocysteine = tetrahydropteroyltri-L-glutamate + L-methionine. The protein operates within amino-acid biosynthesis; L-methionine biosynthesis via de novo pathway; L-methionine from L-homocysteine (MetE route): step 1/1. Its function is as follows. Catalyzes the transfer of a methyl group from 5-methyltetrahydrofolate to homocysteine resulting in methionine formation. This Yersinia pseudotuberculosis serotype O:1b (strain IP 31758) protein is 5-methyltetrahydropteroyltriglutamate--homocysteine methyltransferase.